The following is a 110-amino-acid chain: Bowman-Birk type proteinase inhibitor (110 aa).

Residues 1–28 (MVLMNKKAIMKLALMLFLLGFTANVVDA) form the signal peptide. Residues 29–42 (RFDSTSFITQVLSN) constitute a propeptide that is removed on maturation. 7 cysteine pairs are disulfide-bonded: cysteine 50–cysteine 103, cysteine 51–cysteine 66, cysteine 54–cysteine 99, cysteine 56–cysteine 64, cysteine 73–cysteine 80, cysteine 77–cysteine 92, and cysteine 82–cysteine 90.

In terms of assembly, monomer.

In terms of biological role, inhibitor of trypsin and of chymotrypsin. The polypeptide is Bowman-Birk type proteinase inhibitor (Lens culinaris (Lentil)).